The following is a 123-amino-acid chain: MAIAKEDILAAVEGMTVLELNELVKAFEEKFGVSAAAVAVAGPAGGAAAAVEEKTEFTVVLTEAGSNKVAVIKAVRELTGLGLKEAKDVVDGAPKAVKEGVDKAAAEEAKKKLEEAGAKVEVK.

It belongs to the bacterial ribosomal protein bL12 family. As to quaternary structure, homodimer. Part of the ribosomal stalk of the 50S ribosomal subunit. Forms a multimeric L10(L12)X complex, where L10 forms an elongated spine to which 2 to 4 L12 dimers bind in a sequential fashion. Binds GTP-bound translation factors.

Its function is as follows. Forms part of the ribosomal stalk which helps the ribosome interact with GTP-bound translation factors. Is thus essential for accurate translation. This Burkholderia vietnamiensis (strain G4 / LMG 22486) (Burkholderia cepacia (strain R1808)) protein is Large ribosomal subunit protein bL12.